Here is an 87-residue protein sequence, read N- to C-terminus: Small ribosomal subunit protein uS15 (87 aa).

A compositionally biased stretch (basic and acidic residues) spans 1-19; the sequence is MDKAKKQELMAKHARHEGD. The tract at residues 1–23 is disordered; sequence MDKAKKQELMAKHARHEGDTGSP.

This sequence belongs to the universal ribosomal protein uS15 family. Part of the 30S ribosomal subunit. Forms a bridge to the 50S subunit in the 70S ribosome, contacting the 23S rRNA.

Functionally, one of the primary rRNA binding proteins, it binds directly to 16S rRNA where it helps nucleate assembly of the platform of the 30S subunit by binding and bridging several RNA helices of the 16S rRNA. Its function is as follows. Forms an intersubunit bridge (bridge B4) with the 23S rRNA of the 50S subunit in the ribosome. The chain is Small ribosomal subunit protein uS15 from Clostridium botulinum (strain Loch Maree / Type A3).